Reading from the N-terminus, the 139-residue chain is NADPH-dependent 7-cyano-7-deazaguanine reductase (139 aa).

Residue Cys-34 is the Thioimide intermediate of the active site. Asp-41 functions as the Proton donor in the catalytic mechanism. Substrate contacts are provided by residues 56–58 (IEL) and 75–76 (HE).

This sequence belongs to the GTP cyclohydrolase I family. QueF type 1 subfamily.

The protein localises to the cytoplasm. The catalysed reaction is 7-aminomethyl-7-carbaguanine + 2 NADP(+) = 7-cyano-7-deazaguanine + 2 NADPH + 3 H(+). It functions in the pathway tRNA modification; tRNA-queuosine biosynthesis. In terms of biological role, catalyzes the NADPH-dependent reduction of 7-cyano-7-deazaguanine (preQ0) to 7-aminomethyl-7-deazaguanine (preQ1). The sequence is that of NADPH-dependent 7-cyano-7-deazaguanine reductase from Nitrosomonas europaea (strain ATCC 19718 / CIP 103999 / KCTC 2705 / NBRC 14298).